Here is a 414-residue protein sequence, read N- to C-terminus: 26S proteasome regulatory subunit 6B homolog (414 aa).

Residues 1 to 33 (MAATMVLDPKPSSTPPPTLPNPYTTDSQSTDSE) are disordered. Residues 21 to 30 (NPYTTDSQST) show a composition bias toward low complexity. The stretch at 55–81 (EYVKDELKNLKREQLRSQEEVKRIQSV) forms a coiled coil. An ATP-binding site is contributed by 202 to 209 (GPPGTGKT).

The protein belongs to the AAA ATPase family.

The protein resides in the cytoplasm. The protein localises to the nucleus. Its function is as follows. The 26S proteasome is involved in the ATP-dependent degradation of ubiquitinated proteins. The regulatory (or ATPase) complex confers ATP dependency and substrate specificity to the 26S complex. This is 26S proteasome regulatory subunit 6B homolog from Helianthus annuus (Common sunflower).